The sequence spans 427 residues: Glutamate-1-semialdehyde 2,1-aminomutase (427 aa).

At K265 the chain carries N6-(pyridoxal phosphate)lysine.

It belongs to the class-III pyridoxal-phosphate-dependent aminotransferase family. HemL subfamily. In terms of assembly, homodimer. Pyridoxal 5'-phosphate is required as a cofactor.

It is found in the cytoplasm. It carries out the reaction (S)-4-amino-5-oxopentanoate = 5-aminolevulinate. The protein operates within porphyrin-containing compound metabolism; protoporphyrin-IX biosynthesis; 5-aminolevulinate from L-glutamyl-tRNA(Glu): step 2/2. This chain is Glutamate-1-semialdehyde 2,1-aminomutase, found in Burkholderia cenocepacia (strain HI2424).